A 270-amino-acid polypeptide reads, in one-letter code: Regulatory protein RecX (270 aa).

This sequence belongs to the RecX family.

It is found in the cytoplasm. Its function is as follows. Modulates RecA activity. This Bacillus cereus (strain B4264) protein is Regulatory protein RecX.